The following is a 180-amino-acid chain: Bifunctional protein PyrR (180 aa).

Residues 101-113 (VILIDDVLFTGRT) carry the PRPP-binding motif.

The protein belongs to the purine/pyrimidine phosphoribosyltransferase family. PyrR subfamily. In terms of assembly, homodimer and homohexamer; in equilibrium.

The catalysed reaction is UMP + diphosphate = 5-phospho-alpha-D-ribose 1-diphosphate + uracil. Its function is as follows. Regulates transcriptional attenuation of the pyrimidine nucleotide (pyr) operon by binding in a uridine-dependent manner to specific sites on pyr mRNA. This disrupts an antiterminator hairpin in the RNA and favors formation of a downstream transcription terminator, leading to a reduced expression of downstream genes. Also displays a weak uracil phosphoribosyltransferase activity which is not physiologically significant. The sequence is that of Bifunctional protein PyrR from Oceanobacillus iheyensis (strain DSM 14371 / CIP 107618 / JCM 11309 / KCTC 3954 / HTE831).